We begin with the raw amino-acid sequence, 713 residues long: Polyribonucleotide nucleotidyltransferase (713 aa).

2 residues coordinate Mg(2+): Asp-493 and Asp-499. The KH domain maps to 560-619 (PRMITIKINPEKIRDVIGKGGSVIRALTEETGTTIDISDDGVVTIASTNSEGMAEAKKRI). An S1 motif domain is found at 629–697 (GHVYEGTVLK…EKGRVRLSAK (69 aa)).

The protein belongs to the polyribonucleotide nucleotidyltransferase family. Mg(2+) serves as cofactor.

It localises to the cytoplasm. It catalyses the reaction RNA(n+1) + phosphate = RNA(n) + a ribonucleoside 5'-diphosphate. Functionally, involved in mRNA degradation. Catalyzes the phosphorolysis of single-stranded polyribonucleotides processively in the 3'- to 5'-direction. The chain is Polyribonucleotide nucleotidyltransferase from Burkholderia mallei (strain NCTC 10247).